The sequence spans 295 residues: Ribosomal protein L11 methyltransferase (295 aa).

S-adenosyl-L-methionine-binding residues include Thr-146, Gly-167, Asp-189, and Asn-231.

It belongs to the methyltransferase superfamily. PrmA family.

The protein resides in the cytoplasm. It catalyses the reaction L-lysyl-[protein] + 3 S-adenosyl-L-methionine = N(6),N(6),N(6)-trimethyl-L-lysyl-[protein] + 3 S-adenosyl-L-homocysteine + 3 H(+). Functionally, methylates ribosomal protein L11. This chain is Ribosomal protein L11 methyltransferase, found in Vibrio campbellii (strain ATCC BAA-1116).